Reading from the N-terminus, the 258-residue chain is Small ribosomal subunit protein mS35 (258 aa).

The N-terminal 39 residues, 1 to 39, are a transit peptide targeting the mitochondrion; the sequence is MAFNPLLSLLKADAIFLGQLSKSSFCATSRAFSVFYFTR.

Belongs to the mitochondrion-specific ribosomal protein mS35 family. Component of the mitochondrial small ribosomal subunit (mt-SSU). Mature yeast 74S mitochondrial ribosomes consist of a small (37S) and a large (54S) subunit. The 37S small subunit contains a 15S ribosomal RNA (15S mt-rRNA) and at least 32 different proteins. The 54S large subunit contains a 21S rRNA (21S mt-rRNA) and at least 45 different proteins.

Its subcellular location is the mitochondrion. Functionally, component of the mitochondrial ribosome (mitoribosome), a dedicated translation machinery responsible for the synthesis of mitochondrial genome-encoded proteins, including at least some of the essential transmembrane subunits of the mitochondrial respiratory chain. The mitoribosomes are attached to the mitochondrial inner membrane and translation products are cotranslationally integrated into the membrane. The polypeptide is Small ribosomal subunit protein mS35 (rsm24) (Schizosaccharomyces pombe (strain 972 / ATCC 24843) (Fission yeast)).